The following is a 209-amino-acid chain: MSVHEVNHPLVKHKIGLMREAGISTKKFRELTSEIASLLAYEASRDFQIEPRTITGWDGSKVGIQQLKGKKVTVVPILRAGIGMLDGVLDMIPNAKVSVVGLARNEETLEAHTYFERFVGNLDERLALIIDPMLATGGSMAATIEMLKNNGCLQIRVLCLVAAPEGLARITAAYPEIDIYVAAIDERLNEQGYILPGLGDAGDKIFGTK.

5-phospho-alpha-D-ribose 1-diphosphate contacts are provided by residues arginine 79, arginine 104, and 131–139 (DPMLATGGS). Residues isoleucine 194 and 199-201 (GDA) contribute to the uracil site. Aspartate 200 lines the 5-phospho-alpha-D-ribose 1-diphosphate pocket.

This sequence belongs to the UPRTase family. Requires Mg(2+) as cofactor.

The catalysed reaction is UMP + diphosphate = 5-phospho-alpha-D-ribose 1-diphosphate + uracil. It functions in the pathway pyrimidine metabolism; UMP biosynthesis via salvage pathway; UMP from uracil: step 1/1. With respect to regulation, allosterically activated by GTP. In terms of biological role, catalyzes the conversion of uracil and 5-phospho-alpha-D-ribose 1-diphosphate (PRPP) to UMP and diphosphate. This is Uracil phosphoribosyltransferase from Geobacter sp. (strain M21).